We begin with the raw amino-acid sequence, 208 residues long: Inactive ribonuclease-like protein 10 (208 aa).

Positions M1–G24 are cleaved as a signal peptide. Residues N125 and N147 are each glycosylated (N-linked (GlcNAc...) asparagine).

Belongs to the pancreatic ribonuclease family. Post-translationally, the N-terminus is blocked. Glycosylated. As to expression, male-specific expression in proximal caput of the epididymis (at protein level).

It is found in the secreted. Its function is as follows. Secreted proximal epididymal protein required for post-testicular sperm maturation and male fertility. May be involved in sperm adhesion to the egg zona pellucida. Does not have ribonuclease activity. The chain is Inactive ribonuclease-like protein 10 (Rnase10) from Mus musculus (Mouse).